Here is an 83-residue protein sequence, read N- to C-terminus: Normal mucosa of esophagus-specific gene 1 protein (83 aa).

The protein belongs to the complex I NDUFA4 subunit family. As to expression, strongly expressed in vertebrae, brain, intestine and stomach.

Its subcellular location is the nucleus. In Mus musculus (Mouse), this protein is Normal mucosa of esophagus-specific gene 1 protein (Nmes1).